A 504-amino-acid chain; its full sequence is Maturase K (504 aa).

Belongs to the intron maturase 2 family. MatK subfamily.

The protein resides in the plastid. Its subcellular location is the chloroplast. In terms of biological role, usually encoded in the trnK tRNA gene intron. Probably assists in splicing its own and other chloroplast group II introns. The polypeptide is Maturase K (Aruncus dioicus (Goat's beard)).